The chain runs to 278 residues: HTH-type transcriptional activator RhaS (278 aa).

The region spanning 174-272 is the HTH araC/xylS-type domain; it reads NLLLAWLEDH…NWSPRDIRQG (99 aa). 2 consecutive DNA-binding regions (H-T-H motif) follow at residues 191–212 and 239–262; these read DAVA…KQQT and VTDI…HREF.

As to quaternary structure, binds DNA as a dimer.

The protein localises to the cytoplasm. In terms of biological role, activates expression of the rhaBAD and rhaT operons. This chain is HTH-type transcriptional activator RhaS, found in Shigella boydii serotype 18 (strain CDC 3083-94 / BS512).